We begin with the raw amino-acid sequence, 155 residues long: MSRRGTVEEKTAKSDPIYRNRLVNMLVNRILKHGKKSLAYQILYRAVKKIQQKTETNPLSVLRQAIRGVTPDIAVKARRVGGSTHQVPIEIGSTQGKALAIRWLLGAARKRPGRNMAFKLSSELVDAAKGSGDAIRKKEETHRMAEANRAFAHFR.

It belongs to the universal ribosomal protein uS7 family. Part of the 30S ribosomal subunit.

It is found in the plastid. It localises to the chloroplast. One of the primary rRNA binding proteins, it binds directly to 16S rRNA where it nucleates assembly of the head domain of the 30S subunit. The protein is Small ribosomal subunit protein uS7c of Beta vulgaris (Sugar beet).